Consider the following 779-residue polypeptide: Endonuclease MutS2 (779 aa).

328–335 (GPNTGGKT) provides a ligand contact to ATP. The 76-residue stretch at 704–779 (LDLRGKRYEE…GSGATIVTLG (76 aa)) folds into the Smr domain.

Belongs to the DNA mismatch repair MutS family. MutS2 subfamily. In terms of assembly, homodimer. Binds to stalled ribosomes, contacting rRNA.

In terms of biological role, endonuclease that is involved in the suppression of homologous recombination and thus may have a key role in the control of bacterial genetic diversity. Acts as a ribosome collision sensor, splitting the ribosome into its 2 subunits. Detects stalled/collided 70S ribosomes which it binds and splits by an ATP-hydrolysis driven conformational change. Acts upstream of the ribosome quality control system (RQC), a ribosome-associated complex that mediates the extraction of incompletely synthesized nascent chains from stalled ribosomes and their subsequent degradation. Probably generates substrates for RQC. In Streptococcus pyogenes serotype M18 (strain MGAS8232), this protein is Endonuclease MutS2.